Consider the following 214-residue polypeptide: Leucyl/phenylalanyl-tRNA--protein transferase (214 aa).

The protein belongs to the L/F-transferase family.

It is found in the cytoplasm. The catalysed reaction is N-terminal L-lysyl-[protein] + L-leucyl-tRNA(Leu) = N-terminal L-leucyl-L-lysyl-[protein] + tRNA(Leu) + H(+). It catalyses the reaction N-terminal L-arginyl-[protein] + L-leucyl-tRNA(Leu) = N-terminal L-leucyl-L-arginyl-[protein] + tRNA(Leu) + H(+). It carries out the reaction L-phenylalanyl-tRNA(Phe) + an N-terminal L-alpha-aminoacyl-[protein] = an N-terminal L-phenylalanyl-L-alpha-aminoacyl-[protein] + tRNA(Phe). Its function is as follows. Functions in the N-end rule pathway of protein degradation where it conjugates Leu, Phe and, less efficiently, Met from aminoacyl-tRNAs to the N-termini of proteins containing an N-terminal arginine or lysine. In Cereibacter sphaeroides (strain KD131 / KCTC 12085) (Rhodobacter sphaeroides), this protein is Leucyl/phenylalanyl-tRNA--protein transferase.